A 452-amino-acid polypeptide reads, in one-letter code: MSRKYFGTDGVRGKVGEFPITPDFAMKLGWAAGTVMAASGTKEVIIGKDTRLSGYMLESAMEAGFCAAGVNVALTGPLPTPAIAYLTSTFRADAGVVISASHNPYYDNGIKFFSNTGTKLTDEQELEIERLLVSAIEGGAMTCVASDKLGKVRRINDAAGRYIEFCKGTFPNSLSLTGLKIVVDSAHGAAYHIAKNVYRELGAEVISINDKPDGININEHCGATHMDSLQTAVMIHEADLGIALDGDADRLMMVDSKGQVIDGDALLYLLAKSAQQRGEQVSGVIGTLMSNLGFEQALANLGIPFKRAKVGDRYVVELLKETGWRLGGENSGHLLMLDFTTTGDAIVASLQVLRALLESGAGLADAITELNMFPQVLINVRLNGNAAVGLSHPSVSDAVATAESALGNDGRVLLRKSGTEPLIRVMVEAKDAVKANQYAELIADAVRAVFPA.

Ser101 acts as the Phosphoserine intermediate in catalysis. The Mg(2+) site is built by Ser101, Asp245, Asp247, and Asp249. Ser101 carries the phosphoserine modification.

It belongs to the phosphohexose mutase family. Mg(2+) serves as cofactor. Post-translationally, activated by phosphorylation.

The catalysed reaction is alpha-D-glucosamine 1-phosphate = D-glucosamine 6-phosphate. Catalyzes the conversion of glucosamine-6-phosphate to glucosamine-1-phosphate. This chain is Phosphoglucosamine mutase 2, found in Shewanella amazonensis (strain ATCC BAA-1098 / SB2B).